The primary structure comprises 190 residues: Surfactant protein C (190 aa).

Positions 1-24 (MDVGSKEVLMESPPDYTAVPGGRL) are excised as a propeptide. 2 S-palmitoyl cysteine lipidation sites follow: C28 and C29. Residues 59 to 190 (HMSQKHTEMV…LCGEVPLYYT (132 aa)) constitute a propeptide that is removed on maturation. Residues 94-190 (FSIGSTGTVV…LCGEVPLYYT (97 aa)) enclose the BRICHOS domain. A disulfide bond links C121 and C182.

The protein localises to the secreted. It localises to the extracellular space. The protein resides in the surface film. Its function is as follows. Pulmonary surfactant associated proteins promote alveolar stability by lowering the surface tension at the air-liquid interface in the peripheral air spaces. This chain is Surfactant protein C (SFTPC), found in Bos taurus (Bovine).